The sequence spans 110 residues: Large ribosomal subunit protein uL22 (110 aa).

Belongs to the universal ribosomal protein uL22 family. Part of the 50S ribosomal subunit.

In terms of biological role, this protein binds specifically to 23S rRNA; its binding is stimulated by other ribosomal proteins, e.g. L4, L17, and L20. It is important during the early stages of 50S assembly. It makes multiple contacts with different domains of the 23S rRNA in the assembled 50S subunit and ribosome. The globular domain of the protein is located near the polypeptide exit tunnel on the outside of the subunit, while an extended beta-hairpin is found that lines the wall of the exit tunnel in the center of the 70S ribosome. The sequence is that of Large ribosomal subunit protein uL22 from Vibrio parahaemolyticus serotype O3:K6 (strain RIMD 2210633).